We begin with the raw amino-acid sequence, 147 residues long: Hemoglobin subunit epsilon (147 aa).

Residues 3-147 (HFTAEEKAII…VATALAHKYH (145 aa)) enclose the Globin domain. Phosphoserine is present on residues S14 and S51. 2 residues coordinate heme b: H64 and H93.

This sequence belongs to the globin family. In terms of assembly, heterotetramer of two alpha chains and two epsilon chains in early embryonic hemoglobin Gower-2; two zeta chains and two epsilon chains in early embryonic hemoglobin Gower-1. In terms of tissue distribution, red blood cells.

In terms of biological role, the epsilon chain is a beta-type chain of early mammalian embryonic hemoglobin. In Otolemur crassicaudatus (Brown greater galago), this protein is Hemoglobin subunit epsilon (HBE1).